Here is a 634-residue protein sequence, read N- to C-terminus: Nicotinic receptor-associated protein 1 (634 aa).

C2 domains lie at 1–141 and 159–295; these read MNQP…KAHL and KTGS…EILL. Ca(2+) is bound by residues leucine 29, aspartate 30, aspartate 36, aspartate 105, aspartate 107, aspartate 119, aspartate 189, aspartate 195, aspartate 251, aspartate 253, and aspartate 271. Positions 338–557 constitute a VWFA domain; it reads DFAVAVDFTA…LDPDVIQENL (220 aa). The interval 576 to 603 is disordered; it reads RGFQPRPVDDPWRRDSPPPEFDPILDGT. The segment covering 582-592 has biased composition (basic and acidic residues); it reads PVDDPWRRDSP.

It belongs to the copine family. As to quaternary structure, interacts with nicotinic acetylcholine receptor. The cofactor is Ca(2+). As to expression, expressed in head and tail neurons, ventral cord moto-neurons, body wall muscles and hypodermal cells of the vulva.

The protein localises to the cell membrane. In terms of biological role, exhibits calcium-dependent phospholipid binding properties. May function in membrane trafficking. Regulates synaptic levels of nicotinic acetylcholine receptor subunit lev-1 and unc-38 in the nerve cord. Involved in nicotinic acetylcholine receptor (nAChR)-mediated sensitivity to nicotine and levamisole. Affects directional sperm motility. The chain is Nicotinic receptor-associated protein 1 (nra-1) from Caenorhabditis elegans.